Consider the following 297-residue polypeptide: Ribosomal RNA small subunit methyltransferase H (297 aa).

Residues 37-39 (GGH), D56, F87, D102, and H109 contribute to the S-adenosyl-L-methionine site.

It belongs to the methyltransferase superfamily. RsmH family.

The protein localises to the cytoplasm. It catalyses the reaction cytidine(1402) in 16S rRNA + S-adenosyl-L-methionine = N(4)-methylcytidine(1402) in 16S rRNA + S-adenosyl-L-homocysteine + H(+). Its function is as follows. Specifically methylates the N4 position of cytidine in position 1402 (C1402) of 16S rRNA. The chain is Ribosomal RNA small subunit methyltransferase H from Borrelia turicatae (strain 91E135).